The chain runs to 248 residues: MLLIPAIDLKDGQCVRLKQGDMDQATVFSEDPAAMARHWVEQGARRLHLVDLNGAFVGKPRNEEAIKAIIAEVGDEIPVQLGGGIRDLNTIERWLDDGLSYVIIGTAAVKNPGFLKDACSAFGGHIIVGLDARDGKVATDGWSKLTGHEVADLARKYEDYGVEAIIYTDIGRDGMLQGINIDATVKLAQSMSIPVIASGGLSNLADIDNLCAVEGEGVEGVICGRAIYSGDLNFAAAQALADKLRDGQ.

D8 (proton acceptor) is an active-site residue. D131 acts as the Proton donor in catalysis.

Belongs to the HisA/HisF family.

Its subcellular location is the cytoplasm. The catalysed reaction is 1-(5-phospho-beta-D-ribosyl)-5-[(5-phospho-beta-D-ribosylamino)methylideneamino]imidazole-4-carboxamide = 5-[(5-phospho-1-deoxy-D-ribulos-1-ylimino)methylamino]-1-(5-phospho-beta-D-ribosyl)imidazole-4-carboxamide. Its pathway is amino-acid biosynthesis; L-histidine biosynthesis; L-histidine from 5-phospho-alpha-D-ribose 1-diphosphate: step 4/9. In Cupriavidus necator (strain ATCC 17699 / DSM 428 / KCTC 22496 / NCIMB 10442 / H16 / Stanier 337) (Ralstonia eutropha), this protein is 1-(5-phosphoribosyl)-5-[(5-phosphoribosylamino)methylideneamino] imidazole-4-carboxamide isomerase.